Here is a 181-residue protein sequence, read N- to C-terminus: Ribulose bisphosphate carboxylase small subunit, chloroplastic 6 (181 aa).

Residues 1–57 (MASSIVSSAAVATRSNVAQASMVAPFTGLKSAASFPVTKKNNNVDITSLASNGGRVR) constitute a chloroplast transit peptide.

This sequence belongs to the RuBisCO small chain family. Heterohexadecamer of 8 large and 8 small subunits.

It is found in the plastid. The protein localises to the chloroplast. Functionally, ruBisCO catalyzes two reactions: the carboxylation of D-ribulose 1,5-bisphosphate, the primary event in carbon dioxide fixation, as well as the oxidative fragmentation of the pentose substrate. Both reactions occur simultaneously and in competition at the same active site. Although the small subunit is not catalytic it is essential for maximal activity. This is Ribulose bisphosphate carboxylase small subunit, chloroplastic 6 from Solanum tuberosum (Potato).